A 4579-amino-acid polypeptide reads, in one-letter code: Sacsin (4579 aa).

The 76-residue stretch at 9 to 84 (VPVTVLPGCV…FVNLQSKGLK (76 aa)) folds into the Ubiquitin-like domain. Residue Lys943 is modified to N6-acetyllysine. Residues Ser1779 and Ser2511 each carry the phosphoserine modification. Position 2516 is a phosphothreonine (Thr2516). At Ser3435 the chain carries Phosphoserine. Disordered regions lie at residues 4248-4273 (PEESSQSRDSAPSTPTSPTEFLTPGL) and 4279-4298 (LFSGRESHKTSSKHQSPKKL). The segment covering 4254–4267 (SRDSAPSTPTSPTE) has biased composition (polar residues). Thr4261 is subject to Phosphothreonine. A Phosphoserine modification is found at Ser4264. The segment covering 4288-4298 (TSSKHQSPKKL) has biased composition (basic residues). The 88-residue stretch at 4306 to 4393 (ILKEVTSVVE…ASRFQSDKYS (88 aa)) folds into the J domain. The disordered stretch occupies residues 4405 to 4427 (ATSHKSERQQQNKEKCPPSAGQT). Positions 4406-4420 (TSHKSERQQQNKEKC) are enriched in basic and acidic residues. Residues 4451-4567 (LRQARANFSA…MRVMECTACI (117 aa)) enclose the HEPN domain.

As to expression, highly expressed in the central nervous system. Also found in skeletal muscle and at low levels in pancreas.

The protein resides in the cytoplasm. Its function is as follows. Co-chaperone which acts as a regulator of the Hsp70 chaperone machinery and may be involved in the processing of other ataxia-linked proteins. This Homo sapiens (Human) protein is Sacsin (SACS).